Consider the following 353-residue polypeptide: Chorismate synthase (353 aa).

Arginine 48 is a binding site for NADP(+). FMN is bound by residues 125 to 127 (RSS), 238 to 239 (NA), glycine 278, 293 to 297 (KPTSS), and arginine 319.

It belongs to the chorismate synthase family. Homotetramer. It depends on FMNH2 as a cofactor.

It carries out the reaction 5-O-(1-carboxyvinyl)-3-phosphoshikimate = chorismate + phosphate. It participates in metabolic intermediate biosynthesis; chorismate biosynthesis; chorismate from D-erythrose 4-phosphate and phosphoenolpyruvate: step 7/7. Catalyzes the anti-1,4-elimination of the C-3 phosphate and the C-6 proR hydrogen from 5-enolpyruvylshikimate-3-phosphate (EPSP) to yield chorismate, which is the branch point compound that serves as the starting substrate for the three terminal pathways of aromatic amino acid biosynthesis. This reaction introduces a second double bond into the aromatic ring system. This Buchnera aphidicola subsp. Cinara cedri (strain Cc) protein is Chorismate synthase.